A 397-amino-acid polypeptide reads, in one-letter code: Argininosuccinate synthase (397 aa).

8–16 (AYSGGLDTS) lines the ATP pocket. L-citrulline contacts are provided by tyrosine 86 and serine 91. Glycine 116 lines the ATP pocket. Positions 118, 122, and 123 each coordinate L-aspartate. Position 122 (asparagine 122) interacts with L-citrulline. L-citrulline-binding residues include arginine 126, serine 175, serine 184, glutamate 260, and tyrosine 272.

This sequence belongs to the argininosuccinate synthase family. Type 1 subfamily. In terms of assembly, homotetramer.

It is found in the cytoplasm. The enzyme catalyses L-citrulline + L-aspartate + ATP = 2-(N(omega)-L-arginino)succinate + AMP + diphosphate + H(+). It participates in amino-acid biosynthesis; L-arginine biosynthesis; L-arginine from L-ornithine and carbamoyl phosphate: step 2/3. The chain is Argininosuccinate synthase from Clostridium botulinum (strain Kyoto / Type A2).